Here is a 199-residue protein sequence, read N- to C-terminus: ATP synthase subunit a (199 aa).

6 helical membrane-spanning segments follow: residues 2-22, 25-45, 53-73, 80-100, 143-163, and 164-184; these read TNVY…LFYF, SMLG…FSYT, VISV…YFMY, MIEF…LTFI, VNVL…ELYL, and GIFY…VFFI.

The protein belongs to the ATPase A chain family. F-type ATPases have 2 components, CF(1) - the catalytic core - and CF(0) - the membrane proton channel. CF(1) has five subunits: alpha(3), beta(3), gamma(1), delta(1), epsilon(1). CF(0) has three main subunits: a, b and c.

It localises to the mitochondrion inner membrane. Mitochondrial membrane ATP synthase (F(1)F(0) ATP synthase or Complex V) produces ATP from ADP in the presence of a proton gradient across the membrane which is generated by electron transport complexes of the respiratory chain. F-type ATPases consist of two structural domains, F(1) - containing the extramembraneous catalytic core and F(0) - containing the membrane proton channel, linked together by a central stalk and a peripheral stalk. During catalysis, ATP synthesis in the catalytic domain of F(1) is coupled via a rotary mechanism of the central stalk subunits to proton translocation. Key component of the proton channel; it may play a direct role in the translocation of protons across the membrane. This chain is ATP synthase subunit a (ATP6), found in Ascaris suum (Pig roundworm).